Reading from the N-terminus, the 290-residue chain is Agmatinase (290 aa).

The Mn(2+) site is built by His-112, Asp-135, His-137, Asp-139, Asp-216, and Asp-218.

Belongs to the arginase family. Agmatinase subfamily. Requires Mn(2+) as cofactor.

It carries out the reaction agmatine + H2O = urea + putrescine. It participates in amine and polyamine biosynthesis; putrescine biosynthesis via agmatine pathway; putrescine from agmatine: step 1/1. Functionally, catalyzes the formation of putrescine from agmatine. The protein is Agmatinase (speB) of Bacillus anthracis.